The chain runs to 331 residues: UPF0324 membrane protein SACOL0411 (331 aa).

A run of 11 helical transmembrane segments spans residues 9–26 (FMIG…SFLA), 31–48 (ILDK…AILY), 69–88 (LLRF…DIIG), 93–115 (LLAI…NKLL), 122–144 (ALLL…APIF), 154–176 (SIGI…YAIF), 183–202 (YGAW…LAGG), 217–234 (LGRV…ILIM), 247–269 (ISIP…VTIP), 273–295 (LNIL…GLNV), and 308–330 (LMTI…HWLY).

It belongs to the UPF0324 family.

It localises to the cell membrane. The protein is UPF0324 membrane protein SACOL0411 of Staphylococcus aureus (strain COL).